A 161-amino-acid polypeptide reads, in one-letter code: Cytochrome c-type biogenesis protein CcmE (161 aa).

Over 1-8 (MNPRRKKR) the chain is Cytoplasmic. A helical; Signal-anchor for type II membrane protein membrane pass occupies residues 9–29 (LTLAVALVFGLGATIGLMLYA). At 30–161 (LSQNMDLFYT…SDEQKQGRVQ (132 aa)) the chain is on the periplasmic side. Residues His129 and Tyr133 each contribute to the heme site.

The protein belongs to the CcmE/CycJ family.

It localises to the cell inner membrane. Heme chaperone required for the biogenesis of c-type cytochromes. Transiently binds heme delivered by CcmC and transfers the heme to apo-cytochromes in a process facilitated by CcmF and CcmH. This is Cytochrome c-type biogenesis protein CcmE from Photobacterium profundum (strain SS9).